A 352-amino-acid polypeptide reads, in one-letter code: Holliday junction branch migration complex subunit RuvB (352 aa).

Positions 1 to 182 (MRIELLNTPP…FGINSRFDYY (182 aa)) are large ATPase domain (RuvB-L). Residues isoleucine 21, arginine 22, glycine 63, lysine 66, threonine 67, threonine 68, 129–131 (EDF), arginine 172, tyrosine 182, and arginine 219 contribute to the ATP site. Threonine 67 contacts Mg(2+). The small ATPAse domain (RuvB-S) stretch occupies residues 183–253 (EPELLTRIII…IAMKTLECLE (71 aa)). Residues 256 to 352 (EEGLDEMDKK…LPLFDESEAD (97 aa)) form a head domain (RuvB-H) region. DNA contacts are provided by arginine 292, arginine 311, and arginine 316.

Belongs to the RuvB family. Homohexamer. Forms an RuvA(8)-RuvB(12)-Holliday junction (HJ) complex. HJ DNA is sandwiched between 2 RuvA tetramers; dsDNA enters through RuvA and exits via RuvB. An RuvB hexamer assembles on each DNA strand where it exits the tetramer. Each RuvB hexamer is contacted by two RuvA subunits (via domain III) on 2 adjacent RuvB subunits; this complex drives branch migration. In the full resolvosome a probable DNA-RuvA(4)-RuvB(12)-RuvC(2) complex forms which resolves the HJ.

It is found in the cytoplasm. It carries out the reaction ATP + H2O = ADP + phosphate + H(+). In terms of biological role, the RuvA-RuvB-RuvC complex processes Holliday junction (HJ) DNA during genetic recombination and DNA repair, while the RuvA-RuvB complex plays an important role in the rescue of blocked DNA replication forks via replication fork reversal (RFR). RuvA specifically binds to HJ cruciform DNA, conferring on it an open structure. The RuvB hexamer acts as an ATP-dependent pump, pulling dsDNA into and through the RuvAB complex. RuvB forms 2 homohexamers on either side of HJ DNA bound by 1 or 2 RuvA tetramers; 4 subunits per hexamer contact DNA at a time. Coordinated motions by a converter formed by DNA-disengaged RuvB subunits stimulates ATP hydrolysis and nucleotide exchange. Immobilization of the converter enables RuvB to convert the ATP-contained energy into a lever motion, pulling 2 nucleotides of DNA out of the RuvA tetramer per ATP hydrolyzed, thus driving DNA branch migration. The RuvB motors rotate together with the DNA substrate, which together with the progressing nucleotide cycle form the mechanistic basis for DNA recombination by continuous HJ branch migration. Branch migration allows RuvC to scan DNA until it finds its consensus sequence, where it cleaves and resolves cruciform DNA. This chain is Holliday junction branch migration complex subunit RuvB, found in Chlorobium chlorochromatii (strain CaD3).